The sequence spans 264 residues: Forkhead box protein pes-1 (264 aa).

Disordered stretches follow at residues 15-36 and 50-93; these read DLDNCSSLPPTPPKTASPGNSK and DSST…PTKR. Low complexity predominate over residues 50 to 64; it reads DSSTSSSCSVSPASS. Residues 70–89 show a composition bias toward polar residues; that stretch reads ESVGQQQSGRNSPVSSSTES. A DNA-binding region (fork-head) is located at residues 93 to 186; sequence RPKYSYNALI…ISNNCGKLRR (94 aa).

The protein resides in the nucleus. It localises to the cytoplasm. Its function is as follows. Transcription factor. Plays a role in embryogenesis and later development, perhaps acting redundantly with forkhead protein fkh-2. This Caenorhabditis elegans protein is Forkhead box protein pes-1.